We begin with the raw amino-acid sequence, 276 residues long: MDGPAIITQVTNPKEDEARSPVAGEKASQRNISLKKQRGRSILSSFFCCFRDYNVEAPPANSPSVLPPLVEENGGLQKGDQRQVIPVPSPPAKYLLPEVTVLDYGKKCVVIDLDETLVHSSFKPISNADFIVPVEIDGTIHQVYVLKRPHVDEFLQRMGQLFECVLFTASLAKYADPVADLLDRWGVFRARLFRESCVFHRGNYVKDLSRLGRELSKVIIVDNSPASYIFHPENAVPVQSWFDDMTDTELLDLIPFFEGLSREDDVYSMLHRLCSR.

A disordered region spans residues 1–31 (MDGPAIITQVTNPKEDEARSPVAGEKASQRN). An FCP1 homology domain is found at 102 to 260 (LDYGKKCVVI…LDLIPFFEGL (159 aa)). The active-site 4-aspartylphosphate intermediate is D112. Mg(2+) is bound by residues D112, D114, and N223. D114 functions as the Proton donor in the catalytic mechanism.

Monomer. Interacts with REST. Mg(2+) serves as cofactor.

The protein resides in the nucleus. The enzyme catalyses O-phospho-L-seryl-[protein] + H2O = L-seryl-[protein] + phosphate. The catalysed reaction is O-phospho-L-threonyl-[protein] + H2O = L-threonyl-[protein] + phosphate. Preferentially catalyzes the dephosphorylation of 'Ser-5' within the tandem 7 residue repeats in the C-terminal domain (CTD) of the largest RNA polymerase II subunit POLR2A. Negatively regulates RNA polymerase II transcription, possibly by controlling the transition from initiation/capping to processive transcript elongation. Recruited by REST to neuronal genes that contain RE-1 elements, leading to neuronal gene silencing in non-neuronal cells. This is CTD small phosphatase-like protein (Ctdspl) from Mus musculus (Mouse).